The sequence spans 59 residues: MSEKKRVRVRTPGGKELELTPEKTWVLAPKGRKGVKIGLFKDPESGKYFRHKLPDDYPV.

The protein belongs to the Cren7 family. Monomer. In terms of processing, methylated at multiple sites, to varying extents.

The protein localises to the chromosome. It localises to the cytoplasm. Functionally, a chromatin protein, binds double-stranded DNA without sequence specificity. Constrains negative DNA supercoils. The protein is Chromatin protein Cren7 of Sulfolobus acidocaldarius (strain ATCC 33909 / DSM 639 / JCM 8929 / NBRC 15157 / NCIMB 11770).